Here is a 574-residue protein sequence, read N- to C-terminus: MDADSINSFFLIGALLAAVSVLLSPVSSRLGIPILLIFLAVGILAGEDGPGGILFDDYSTAYLVSNLALAIILLDGGMRTRVASFRVALWPALSLATFGVAITTSITGVMAAWLFDLHWLQGLLVGAIVGSTDAAAVFSLLKGRSLNERVGATLEIESGSNDPMAVFLTVTLIAILANVDAELSVSFMLISFIKQFGLGIFLGLGGGWLLWKLVNLSKLAEGLYSILVLSGGLMIYAASNKLGGSGILSIYLVGLFLGNKPTRGRHSILNVLDGMTWVSQIGMFLVLGLLLTPSDLLDIWLPGLALAFGMILFARPLAVWLSLLPFKSFSSRDRWFISWVGLRGAVPIILAVFPMMAGLPGAQLYFNLAFFVVLVSLLVQGASLTTAARLAKVELPPKPLPISRSGVEIYPSSEWEVFVYHLSENKWCIGEPLKRLSMPDGTRIAAVFRHNTLLHPSGSTCLEAGDILCVLGQEKSLEALSNLFSQAPETKEVPRFFGDFFIDTEVKLLDLAPIYGLELDEATGDMTVADLVAAELGSHPVLGDQFLWQSLHWVVAGLNEGKVTNVGIRLPAEA.

The next 13 helical transmembrane spans lie at 6 to 26 (INSFFLIGALLAAVSVLLSPV), 34 to 54 (ILLIFLAVGILAGEDGPGGIL), 58 to 78 (YSTAYLVSNLALAIILLDGGM), 87 to 107 (VALWPALSLATFGVAITTSIT), 109 to 129 (VMAAWLFDLHWLQGLLVGAIV), 173 to 193 (IAILANVDAELSVSFMLISFI), 196 to 216 (FGLGIFLGLGGGWLLWKLVNL), 219 to 239 (LAEGLYSILVLSGGLMIYAAS), 242 to 262 (LGGSGILSIYLVGLFLGNKPT), 271 to 291 (VLDGMTWVSQIGMFLVLGLLL), 299 to 319 (IWLPGLALAFGMILFARPLAV), 335 to 355 (WFISWVGLRGAVPIILAVFPM), and 359 to 379 (LPGAQLYFNLAFFVVLVSLLV). Residues 405–486 (SGVEIYPSSE…LEALSNLFSQ (82 aa)) form the RCK C-terminal domain.

The protein belongs to the monovalent cation:proton antiporter 1 (CPA1) transporter (TC 2.A.36) family. NhaP2 subfamily.

The protein localises to the cell inner membrane. It carries out the reaction K(+)(in) + H(+)(out) = K(+)(out) + H(+)(in). Its function is as follows. K(+)/H(+) antiporter that extrudes potassium in exchange for external protons and maintains the internal concentration of potassium under toxic levels. This Shewanella sp. (strain ANA-3) protein is K(+)/H(+) antiporter NhaP2.